A 96-amino-acid polypeptide reads, in one-letter code: Putative pterin-4-alpha-carbinolamine dehydratase (96 aa).

The protein belongs to the pterin-4-alpha-carbinolamine dehydratase family.

The enzyme catalyses (4aS,6R)-4a-hydroxy-L-erythro-5,6,7,8-tetrahydrobiopterin = (6R)-L-erythro-6,7-dihydrobiopterin + H2O. The polypeptide is Putative pterin-4-alpha-carbinolamine dehydratase (Prochlorococcus marinus (strain MIT 9313)).